The chain runs to 159 residues: Ribosome-binding factor A (159 aa).

The interval 127–159 (TYAGEADPYRRPAVDDAGDSADDADPAEDERPS) is disordered. Acidic residues predominate over residues 142–159 (DAGDSADDADPAEDERPS).

It belongs to the RbfA family. As to quaternary structure, monomer. Binds 30S ribosomal subunits, but not 50S ribosomal subunits or 70S ribosomes.

It is found in the cytoplasm. Its function is as follows. One of several proteins that assist in the late maturation steps of the functional core of the 30S ribosomal subunit. Associates with free 30S ribosomal subunits (but not with 30S subunits that are part of 70S ribosomes or polysomes). Required for efficient processing of 16S rRNA. May interact with the 5'-terminal helix region of 16S rRNA. This is Ribosome-binding factor A from Beutenbergia cavernae (strain ATCC BAA-8 / DSM 12333 / CCUG 43141 / JCM 11478 / NBRC 16432 / NCIMB 13614 / HKI 0122).